The sequence spans 303 residues: Glycine--tRNA ligase alpha subunit (303 aa).

The protein belongs to the class-II aminoacyl-tRNA synthetase family. As to quaternary structure, tetramer of two alpha and two beta subunits.

It localises to the cytoplasm. The enzyme catalyses tRNA(Gly) + glycine + ATP = glycyl-tRNA(Gly) + AMP + diphosphate. In Syntrophomonas wolfei subsp. wolfei (strain DSM 2245B / Goettingen), this protein is Glycine--tRNA ligase alpha subunit.